We begin with the raw amino-acid sequence, 751 residues long: Photosystem I P700 chlorophyll a apoprotein A1 (751 aa).

8 helical membrane passes run Val71 to Ala94, Leu157 to His180, Leu196 to Leu220, Thr292 to Tyr310, Trp347 to Tyr370, Leu386 to Val412, Ala434 to His456, and Phe532 to Leu550. Residues Cys574 and Cys583 each contribute to the [4Fe-4S] cluster site. Helical transmembrane passes span His590–Trp611 and Leu665–Phe687. His676 lines the chlorophyll a' pocket. Residues Met684 and Tyr692 each contribute to the chlorophyll a site. Residue Trp693 participates in phylloquinone binding. The helical transmembrane segment at Ala725–Ala745 threads the bilayer.

It belongs to the PsaA/PsaB family. In terms of assembly, the PsaA/B heterodimer binds the P700 chlorophyll special pair and subsequent electron acceptors. PSI consists of a core antenna complex that captures photons, and an electron transfer chain that converts photonic excitation into a charge separation. The eukaryotic PSI reaction center is composed of at least 11 subunits. P700 is a chlorophyll a/chlorophyll a' dimer, A0 is one or more chlorophyll a, A1 is one or both phylloquinones and FX is a shared 4Fe-4S iron-sulfur center. is required as a cofactor.

The protein resides in the plastid. It is found in the chloroplast thylakoid membrane. It carries out the reaction reduced [plastocyanin] + hnu + oxidized [2Fe-2S]-[ferredoxin] = oxidized [plastocyanin] + reduced [2Fe-2S]-[ferredoxin]. Its function is as follows. PsaA and PsaB bind P700, the primary electron donor of photosystem I (PSI), as well as the electron acceptors A0, A1 and FX. PSI is a plastocyanin-ferredoxin oxidoreductase, converting photonic excitation into a charge separation, which transfers an electron from the donor P700 chlorophyll pair to the spectroscopically characterized acceptors A0, A1, FX, FA and FB in turn. Oxidized P700 is reduced on the lumenal side of the thylakoid membrane by plastocyanin. This is Photosystem I P700 chlorophyll a apoprotein A1 from Welwitschia mirabilis (Tree tumbo).